The following is a 155-amino-acid chain: Ribosomal RNA large subunit methyltransferase H (155 aa).

Residues L73, G104, and 123-128 each bind S-adenosyl-L-methionine; that span reads LSPLTL.

This sequence belongs to the RNA methyltransferase RlmH family. Homodimer.

It localises to the cytoplasm. It catalyses the reaction pseudouridine(1915) in 23S rRNA + S-adenosyl-L-methionine = N(3)-methylpseudouridine(1915) in 23S rRNA + S-adenosyl-L-homocysteine + H(+). In terms of biological role, specifically methylates the pseudouridine at position 1915 (m3Psi1915) in 23S rRNA. This Pseudomonas savastanoi pv. phaseolicola (strain 1448A / Race 6) (Pseudomonas syringae pv. phaseolicola (strain 1448A / Race 6)) protein is Ribosomal RNA large subunit methyltransferase H.